The sequence spans 578 residues: Isocitrate dehydrogenase kinase/phosphatase (578 aa).

ATP is bound by residues 315 to 321 and Lys-336; that span reads APGIRGM. Asp-371 is a catalytic residue.

It belongs to the AceK family.

It is found in the cytoplasm. It carries out the reaction L-seryl-[isocitrate dehydrogenase] + ATP = O-phospho-L-seryl-[isocitrate dehydrogenase] + ADP + H(+). Its function is as follows. Bifunctional enzyme which can phosphorylate or dephosphorylate isocitrate dehydrogenase (IDH) on a specific serine residue. This is a regulatory mechanism which enables bacteria to bypass the Krebs cycle via the glyoxylate shunt in response to the source of carbon. When bacteria are grown on glucose, IDH is fully active and unphosphorylated, but when grown on acetate or ethanol, the activity of IDH declines drastically concomitant with its phosphorylation. This Shigella dysenteriae serotype 1 (strain Sd197) protein is Isocitrate dehydrogenase kinase/phosphatase.